We begin with the raw amino-acid sequence, 1155 residues long: Protein BREAST CANCER SUSCEPTIBILITY 2 homolog B (1155 aa).

4 BRCA2 repeats span residues 63–97 (MPGEIPMFRTGLGKSVVLKESSIAKAKSILAENVA), 116–150 (TAETMPMFRTALGKTVPLKESSIAKPLSILGSDMI), 163–197 (FGVPNSLFQTASNKKVNVSSAGLARAKALLGLEED), and 257–291 (LKVPPTKFQTAGGKSLSVSAEALKRARNLLGDPEL).

In terms of assembly, interacts with RAD51 and DMC1. Interacts with DSS1(I) and DSS1(V). Can interact with both RAD51 and DSS1(I) or both DMC1 and DSS1(I) in a tripartite complex. Expressed in flower buds.

Involved in double-strand break repair and/or homologous recombination by mediating RAD51- and DMC1-facilitated DNA repair. Plays an essential role in both somatic and meiotic homologous recombination. Is crucial for the formation of RAD51 and DMC1 foci during male meiotic homologous recombination in prophase I. This chain is Protein BREAST CANCER SUSCEPTIBILITY 2 homolog B, found in Arabidopsis thaliana (Mouse-ear cress).